The sequence spans 152 residues: Large ribosomal subunit protein bL34c (152 aa).

The transit peptide at 1–91 (MATLSLLSTG…DRCRRFVVRA (91 aa)) directs the protein to the chloroplast.

In terms of assembly, component of the chloroplast large ribosomal subunit (LSU). Mature 70S chloroplast ribosomes of higher plants consist of a small (30S) and a large (50S) subunit. The 30S small subunit contains 1 molecule of ribosomal RNA (16S rRNA) and 24 different proteins. The 50S large subunit contains 3 rRNA molecules (23S, 5S and 4.5S rRNA) and 33 different proteins.

The protein resides in the plastid. Its subcellular location is the chloroplast. Its function is as follows. Component of the chloroplast ribosome (chloro-ribosome), a dedicated translation machinery responsible for the synthesis of chloroplast genome-encoded proteins, including proteins of the transcription and translation machinery and components of the photosynthetic apparatus. The protein is Large ribosomal subunit protein bL34c (RPL34) of Spinacia oleracea (Spinach).